Consider the following 179-residue polypeptide: Repressor of phase 1 flagellin gene (179 aa).

Its function is as follows. Transcriptional repressor of the FliC phase-1 flagellin. The sequence is that of Repressor of phase 1 flagellin gene (fljA) from Salmonella abortus-equi.